The chain runs to 415 residues: Branched-chain-amino-acid aminotransferase 5, chloroplastic (415 aa).

The transit peptide at 1-65 (MERSAVASGF…IVSEVSRNRR (65 aa)) directs the protein to the chloroplast. K261 is modified (N6-(pyridoxal phosphate)lysine).

It belongs to the class-IV pyridoxal-phosphate-dependent aminotransferase family. It depends on pyridoxal 5'-phosphate as a cofactor.

It is found in the plastid. Its subcellular location is the chloroplast. It catalyses the reaction L-leucine + 2-oxoglutarate = 4-methyl-2-oxopentanoate + L-glutamate. The enzyme catalyses L-isoleucine + 2-oxoglutarate = (S)-3-methyl-2-oxopentanoate + L-glutamate. It carries out the reaction L-valine + 2-oxoglutarate = 3-methyl-2-oxobutanoate + L-glutamate. It participates in amino-acid biosynthesis; L-isoleucine biosynthesis; L-isoleucine from 2-oxobutanoate: step 4/4. Its pathway is amino-acid biosynthesis; L-leucine biosynthesis; L-leucine from 3-methyl-2-oxobutanoate: step 4/4. The protein operates within amino-acid biosynthesis; L-valine biosynthesis; L-valine from pyruvate: step 4/4. Its function is as follows. Converts 2-oxo acids to branched-chain amino acids. Acts on leucine, isoleucine and valine. In Arabidopsis thaliana (Mouse-ear cress), this protein is Branched-chain-amino-acid aminotransferase 5, chloroplastic (BCAT5).